The chain runs to 1224 residues: DNA-directed RNA polymerase subunit beta (1224 aa).

This sequence belongs to the RNA polymerase beta chain family. In terms of assembly, the RNAP catalytic core consists of 2 alpha, 1 beta, 1 beta' and 1 omega subunit. When a sigma factor is associated with the core the holoenzyme is formed, which can initiate transcription.

The catalysed reaction is RNA(n) + a ribonucleoside 5'-triphosphate = RNA(n+1) + diphosphate. Its function is as follows. DNA-dependent RNA polymerase catalyzes the transcription of DNA into RNA using the four ribonucleoside triphosphates as substrates. The protein is DNA-directed RNA polymerase subunit beta of Pelotomaculum thermopropionicum (strain DSM 13744 / JCM 10971 / SI).